A 182-amino-acid polypeptide reads, in one-letter code: Ribulose bisphosphate carboxylase small subunit, chloroplastic 5 (182 aa).

The transit peptide at 1 to 49 (MASSLMSNAATTMAAATTTAQANMVAPFNGLKSISAFPVTRKNNDITSV) directs the protein to the chloroplast.

Belongs to the RuBisCO small chain family. In terms of assembly, heterohexadecamer of 8 large and 8 small subunits.

It localises to the plastid. Its subcellular location is the chloroplast. In terms of biological role, ruBisCO catalyzes two reactions: the carboxylation of D-ribulose 1,5-bisphosphate, the primary event in carbon dioxide fixation, as well as the oxidative fragmentation of the pentose substrate. Both reactions occur simultaneously and in competition at the same active site. Although the small subunit is not catalytic it is essential for maximal activity. This is Ribulose bisphosphate carboxylase small subunit, chloroplastic 5 from Mesembryanthemum crystallinum (Common ice plant).